Consider the following 403-residue polypeptide: Adenylate cyclase (403 aa).

The span at 1–16 shows a compositional bias: polar residues; sequence MSTEHTNTPRADSPQS. The tract at residues 1–37 is disordered; it reads MSTEHTNTPRADSPQSAAEAVRGARQHAPAATPAESD. Residues 31-60 are pyruvate binding; the sequence is ATPAESDPILELAEAMEGPLRIPAHTPEAV. The 110-residue stretch at 238 to 347 folds into the Guanylate cyclase domain; it reads AVGFADLVSY…PTVNMAARLT (110 aa). 2 residues coordinate Mg(2+): Asp243 and Asp287.

Belongs to the adenylyl cyclase class-3 family. In terms of assembly, homodimer. It depends on Mg(2+) as a cofactor.

It is found in the cytoplasm. The enzyme catalyses ATP = 3',5'-cyclic AMP + diphosphate. Its activity is regulated as follows. Pyruvate-stimulated. In terms of biological role, plays essential roles in regulation of cellular metabolism by catalyzing the synthesis of a second messenger, cAMP. This chain is Adenylate cyclase (cya), found in Glutamicibacter nicotianae (Arthrobacter nicotianae).